The chain runs to 257 residues: Transcriptional regulatory protein TrcR (257 aa).

One can recognise a Response regulatory domain in the interval 33-147 (RVLLVDDEPA…ELVARLRGLL (115 aa)). Asp82 carries the 4-aspartylphosphate modification. Positions 158-255 (DEALRVGDLT…VRGIGYMLRP (98 aa)) form a DNA-binding region, ompR/PhoB-type.

Post-translationally, phosphorylated by TrcS.

In terms of biological role, member of the two-component regulatory system TrcS/TrcR. Activates its own expression by binding specifically to the AT-rich sequence of the trcR promoter region. Also negatively regulates the expression of Rv1057 by binding to an AT-rich sequences within the Rv1057 upstream sequence. The TrcR-TrcS regulatory system may act as a transition regulatory system involved in adapting to an intracellular environment and transitioning from latency to reactivation. This chain is Transcriptional regulatory protein TrcR, found in Mycobacterium tuberculosis (strain ATCC 25618 / H37Rv).